The following is a 78-amino-acid chain: MARVCQVTGKKPMVGNNVSHANNKTKRRFLPNLQNRKFWVESENRWVSLRITNAALRTIDKNGIDAVLADLRASGEKI.

Belongs to the bacterial ribosomal protein bL28 family.

This chain is Large ribosomal subunit protein bL28, found in Methylobacillus flagellatus (strain ATCC 51484 / DSM 6875 / VKM B-1610 / KT).